The following is a 96-amino-acid chain: Nucleoid-associated protein TC_0612 (96 aa).

It belongs to the YbaB/EbfC family. In terms of assembly, homodimer.

The protein resides in the cytoplasm. Its subcellular location is the nucleoid. Binds to DNA and alters its conformation. May be involved in regulation of gene expression, nucleoid organization and DNA protection. The polypeptide is Nucleoid-associated protein TC_0612 (Chlamydia muridarum (strain MoPn / Nigg)).